Reading from the N-terminus, the 92-residue chain is Small ribosomal subunit protein uS19 (92 aa).

This sequence belongs to the universal ribosomal protein uS19 family.

Functionally, protein S19 forms a complex with S13 that binds strongly to the 16S ribosomal RNA. In Lachnoclostridium phytofermentans (strain ATCC 700394 / DSM 18823 / ISDg) (Clostridium phytofermentans), this protein is Small ribosomal subunit protein uS19.